The sequence spans 833 residues: Vacuolar protein sorting-associated protein 16 homolog (833 aa).

It belongs to the VPS16 family. Component of the homotypic fusion and vacuole protein sorting (HOPS) complex, composed of Vps16A, car/Vps33A, dor/Vps18, Vps39, Vps11 and lt/Vps41. Interacts with Syx17 (via SNARE domain); the interaction may involve multiple components of the HOPS complex and may promote assembly of the Syx17-Snap29-Vamp7 trans-SNARE complex. Component of the class C core vacuole/endosome tethering (CORVET) complex composed of at least Vps8, dor/Vps18, car/Vps33A and Vps16A; unlike in other species, Vps11 is not part of the Drosophila complex. Due to the reduced number of components the Drosophila CORVET complex is often referred to as the miniCORVET complex. The tethering complex core made up of Vps16A, car/Vps33A and dor/Vps18 and shared by both HOPS and CORVET, preferentially associates with CORVET-specific Vps8 over HOPS-specific lt/Vps41. Interacts with Rab2 (GTP-bound form).

Its subcellular location is the late endosome membrane. The protein resides in the lysosome membrane. It is found in the cytoplasmic vesicle. The protein localises to the autophagosome. In terms of biological role, core component of the class C core vacuole/endosome tethering (CORVET) and the homotypic fusion and vacuole protein sorting (HOPS) tethering complexes involved in endo-lysosomal vesicle trafficking and lysosome biogenesis. The CORVET complex facilitates docking and fusion of endosomal vesicles during endosome maturation, acts upstream of HOPS, but is not involved in autophagic flux. The CORVET complex may cooperate with the early endosomal tether Rbsn-5 to mediate endosomal fusion. The HOPS complex facilitates docking and fusion of lysosomes with late endosomes and several other types of vesicles. The HOPS complex is also involved in autophagy and crinophagy (the elimination of unused secretory granules through their fusion with lysosomes). The HOPS complex mediates autophagocitic flux, probably by binding autophagosome-associated Syx17/syntaxin 17, promoting assembly of the trans-SNARE complex and instigating autophagosome-lysosome fusion. Independent of Syx17/syntaxin 17, HOPS is involved in biosynthetic transport to lysosomes and lysosome-related organelles such as eye-pigment granules. Required for endocytic degradation of boss/bride of sevenless and N/Notch in developing ommatidia. This chain is Vacuolar protein sorting-associated protein 16 homolog, found in Drosophila melanogaster (Fruit fly).